The chain runs to 189 residues: Large ribosomal subunit protein uL6 (189 aa).

It belongs to the universal ribosomal protein uL6 family. Part of the 50S ribosomal subunit.

Functionally, this protein binds to the 23S rRNA, and is important in its secondary structure. It is located near the subunit interface in the base of the L7/L12 stalk, and near the tRNA binding site of the peptidyltransferase center. The chain is Large ribosomal subunit protein uL6 from Microcystis aeruginosa (strain NIES-843 / IAM M-2473).